Here is a 106-residue protein sequence, read N- to C-terminus: U1-lycotoxin-Ls1z (106 aa).

Positions 1–19 (MKVLVVVALLVTLISYSSS) are cleaved as a signal peptide. A propeptide spanning residues 20–40 (EGIDDLEADELLSLMANEQTR) is cleaved from the precursor. 4 disulfides stabilise this stretch: Cys-43/Cys-58, Cys-50/Cys-67, Cys-57/Cys-85, and Cys-69/Cys-83.

Belongs to the neurotoxin 19 (CSTX) family. 03 subfamily. Expressed by the venom gland.

Its subcellular location is the secreted. The protein is U1-lycotoxin-Ls1z of Lycosa singoriensis (Wolf spider).